Consider the following 291-residue polypeptide: 4-hydroxy-tetrahydrodipicolinate synthase (291 aa).

T45 lines the pyruvate pocket. The Proton donor/acceptor role is filled by Y133. Catalysis depends on K161, which acts as the Schiff-base intermediate with substrate. A pyruvate-binding site is contributed by I203.

It belongs to the DapA family. As to quaternary structure, homotetramer.

It is found in the cytoplasm. It carries out the reaction L-aspartate 4-semialdehyde + pyruvate = (2S,4S)-4-hydroxy-2,3,4,5-tetrahydrodipicolinate + H2O + H(+). It participates in amino-acid biosynthesis; L-lysine biosynthesis via DAP pathway; (S)-tetrahydrodipicolinate from L-aspartate: step 3/4. With respect to regulation, is allosterically feedback inhibited by lysine; the N.meningitidis enzyme is significantly more sensitive to lysine than the E.coli enzyme. Shows substrate inhibition by (S)-ASA, with a Ki of 1.7 mM. In terms of biological role, catalyzes the condensation of (S)-aspartate-beta-semialdehyde [(S)-ASA] and pyruvate to 4-hydroxy-tetrahydrodipicolinate (HTPA). The protein is 4-hydroxy-tetrahydrodipicolinate synthase of Neisseria meningitidis serogroup B (strain ATCC BAA-335 / MC58).